An 88-amino-acid polypeptide reads, in one-letter code: MAHSRSAKKRIETIRKRTERNKSAKSALKTAIRRFEEAVQGDDKEQAREKLQKALVSIDKGVSKGILHKNTAARRKSRLTKKFNIITG.

It belongs to the bacterial ribosomal protein bS20 family.

In terms of biological role, binds directly to 16S ribosomal RNA. This Desulforudis audaxviator (strain MP104C) protein is Small ribosomal subunit protein bS20.